The following is a 350-amino-acid chain: MSDTTQVGWQLSEHAPLRALNTFHVEATARWLLSVHTPEALPQALAAPEIADQPLLVLGSGSNVLLAGDPPGCVLCFENRDTAIIAHHADHAIVRAGAGVNWHALVLYSLQQGLSGLENLALIPGTVGACPIQNIGAYGAQVGDFIHVVEAFDRHHQQFVRLDAAACALGYRDSVFKQQPERYLIVAVEFNLPLLCELRLDYAGIREELASMGAELARAADVAQAVINIRQRKLPDPDVLGNAGSFFKNPLLPNEQIAALQASFTDMPVYPGEHAGLGKLSAAWLIEQCGWKGRREGDAGVSPEHALVLVNYGTASGAQLLDFARRIAESVRERYSVILEPEPRIIGAHW.

The region spanning 24–195 (HVEATARWLL…VAVEFNLPLL (172 aa)) is the FAD-binding PCMH-type domain. R172 is an active-site residue. The active-site Proton donor is the S245. E342 is an active-site residue.

It belongs to the MurB family. FAD is required as a cofactor.

It is found in the cytoplasm. The enzyme catalyses UDP-N-acetyl-alpha-D-muramate + NADP(+) = UDP-N-acetyl-3-O-(1-carboxyvinyl)-alpha-D-glucosamine + NADPH + H(+). It participates in cell wall biogenesis; peptidoglycan biosynthesis. Its function is as follows. Cell wall formation. In Xanthomonas oryzae pv. oryzae (strain MAFF 311018), this protein is UDP-N-acetylenolpyruvoylglucosamine reductase.